The primary structure comprises 102 residues: PqqA binding protein (102 aa).

The protein belongs to the PqqD family. As to quaternary structure, monomer. Interacts with PqqE.

The protein operates within cofactor biosynthesis; pyrroloquinoline quinone biosynthesis. In terms of biological role, functions as a PqqA binding protein and presents PqqA to PqqE, in the pyrroloquinoline quinone (PQQ) biosynthetic pathway. In Rhodopseudomonas palustris (strain HaA2), this protein is PqqA binding protein.